A 911-amino-acid polypeptide reads, in one-letter code: Inter-alpha-trypsin inhibitor heavy chain H1 (911 aa).

The N-terminal stretch at 1–27 (MDGAMGPRGLLLCMYLVSLLILQAMPA) is a signal peptide. A propeptide spanning residues 28–34 (LGSATGR) is cleaved from the precursor. Positions 37-166 (SSEKRQAVDT…KVTFQLTYEE (130 aa)) constitute a VIT domain. An S-linked (Hex...) cysteine glycan is attached at Cys60. Ser129 bears the Phosphoserine mark. The short motif at 181–184 (VKPK) is the Phagocytosis uptake signal element. Disulfide bonds link Cys244/Cys247 and Cys268/Cys540. An N-linked (GlcNAc...) (complex) asparagine glycan is attached at Asn285. One can recognise a VWFA domain in the interval 290–450 (NKNVVFVIDI…FNFLEVMSME (161 aa)). The hyaluronan-binding stretch occupies residues 387 to 911 (SLPELSNHAS…YTDYIVPDIF (525 aa)). A phosphothreonine mark is found at Thr402 and Thr407. A glycan (N-linked (GlcNAc...) (complex) asparagine) is linked at Asn588. Thr653 carries O-linked (GalNAc...) threonine glycosylation. The residue at position 672 (Asp672) is an Aspartate 1-(chondroitin 4-sulfate)-ester. The propeptide occupies 673–911 (PHFIIHVPQK…YTDYIVPDIF (239 aa)). Asn750 is a glycosylation site (N-linked (GlcNAc...) asparagine).

This sequence belongs to the ITIH family. I-alpha-I plasma protease inhibitors are assembled from one or two heavy chains (HC) and one light chain, bikunin. Inter-alpha-inhibitor (I-alpha-I) is composed of ITIH1/HC1, ITIH2/HC2 and bikunin. Interacts with TNFAIP6 (via Link and CUB domains). In terms of processing, heavy chains are linked to bikunin via chondroitin 4-sulfate esterified to the alpha-carboxyl of the C-terminal aspartate after propeptide cleavage. Post-translationally, the S-linked glycan is composed of two 6-carbon sugars, possibly Glc or Gal.

The protein resides in the secreted. In terms of biological role, may act as a carrier of hyaluronan in serum or as a binding protein between hyaluronan and other matrix protein, including those on cell surfaces in tissues to regulate the localization, synthesis and degradation of hyaluronan which are essential to cells undergoing biological processes. Its function is as follows. Contains a potential peptide which could stimulate a broad spectrum of phagocytotic cells. This chain is Inter-alpha-trypsin inhibitor heavy chain H1 (ITIH1), found in Homo sapiens (Human).